A 128-amino-acid polypeptide reads, in one-letter code: MTRIKRGYIARRRIKKFRLFASSFLNAHSRLTRTITQQKIRALVSSDRDRNNKKRKFRSLWITRINAVIREEGVSYSYKNFIYAQYKIQLLINRKILAQIAILNRNFFYMIFNEIRKEADLKEYIRIN.

It belongs to the bacterial ribosomal protein bL20 family.

The protein resides in the plastid. Its function is as follows. Binds directly to 23S ribosomal RNA and is necessary for the in vitro assembly process of the 50S ribosomal subunit. It is not involved in the protein synthesizing functions of that subunit. This chain is Large ribosomal subunit protein bL20c (rpl20), found in Epifagus virginiana (Beechdrops).